Here is a 463-residue protein sequence, read N- to C-terminus: Metacaspase-1 (463 aa).

The segment at 1 to 149 is disordered; that stretch reads MSWNQYPGGG…PQLQGQGGQS (149 aa). Over residues 7 to 18 the composition is skewed to gly residues; that stretch reads PGGGHHQQGGYG. The segment covering 20 to 56 has biased composition (pro residues); it reads RPPPPQWAQQGPPPPPNMGYRPPPPPQAYYNNPPPPQ. Positions 57 to 83 are enriched in low complexity; it reads QYQRPAPQQNGYQQGGYQQQQQSQGNY. Catalysis depends on residues H247 and C309.

This sequence belongs to the peptidase C14B family.

In terms of biological role, involved in cell death (apoptosis). This Cryptococcus neoformans var. neoformans serotype D (strain B-3501A) (Filobasidiella neoformans) protein is Metacaspase-1 (MCA1).